A 63-amino-acid chain; its full sequence is MLNSEHFNLIQRALDATANELKELGTDSSPSVISHAQTDLEKAVEHIYSTDHPFLSSHVINRK.

The N-terminal stretch at 1–18 is a signal peptide; sequence MLNSEHFNLIQRALDATA.

This is an uncharacterized protein from Bacillus subtilis (strain 168).